The following is a 274-amino-acid chain: Basic leucine zipper transcriptional factor ATF-like 2 (274 aa).

Disordered stretches follow at residues 1-47 (MHLC…ALHQ), 128-151 (GSCYPAQPLSPGPQPHDSPSLLQC), and 187-229 (GSSS…PSSA). The region spanning 17–80 (EQQRQLKKQK…AWWSRTLHVH (64 aa)) is the bZIP domain. The interval 20–41 (RQLKKQKNRAAAQRSRQKHTDK) is basic motif. Residues 37-47 (KHTDKADALHQ) show a composition bias toward basic and acidic residues. Positions 45-66 (LHQQHESLEKDNLALRKEIQSL) are leucine-zipper. A compositionally biased stretch (low complexity) spans 187-196 (GSSSKLSALQ).

Belongs to the bZIP family. Heterodimer; heterodimerizes with JUN family proteins.

The protein resides in the nucleus. Functionally, AP-1 family transcription factor that controls the differentiation of lineage-specific cells in the immune system. Following infection, participates in the differentiation of CD8(+) thymic conventional dendritic cells in the immune system. Acts via the formation of a heterodimer with JUN family proteins that recognizes and binds DNA sequence 5'-TGA[CG]TCA-3' and regulates expression of target genes. Selectively suppresses CCN1 transcription and hence blocks the downstream cell proliferation signals produced by CCN1 and inhibits CCN1-induced anchorage-independent growth and invasion in several cancer types, such as breast cancer, malignant glioma and metastatic melanoma. Possibly acts by interfering with AP-1 binding to CCN1 promoter. This chain is Basic leucine zipper transcriptional factor ATF-like 2 (BATF2), found in Homo sapiens (Human).